Reading from the N-terminus, the 440-residue chain is UDP-glucose 6-dehydrogenase YwqF (440 aa).

NAD(+) contacts are provided by residues 2-19, V11, D30, K35, T121, and E155; that span reads NITVIGTGYVGLVTGVSL. Substrate-binding positions include 151–155, K204, N208, 249–253, and G257; these read EFLRE and FLKAG. C260 (nucleophile) is an active-site residue. K263 provides a ligand contact to NAD(+). Substrate is bound at residue K320. R327 contacts NAD(+).

Belongs to the UDP-glucose/GDP-mannose dehydrogenase family. In terms of processing, phosphorylated on tyrosine residue(s). Phosphorylated by YwqD and dephosphorylated by YwqE in vitro.

The protein localises to the cytoplasm. The catalysed reaction is UDP-alpha-D-glucose + 2 NAD(+) + H2O = UDP-alpha-D-glucuronate + 2 NADH + 3 H(+). It participates in nucleotide-sugar biosynthesis; UDP-alpha-D-glucuronate biosynthesis; UDP-alpha-D-glucuronate from UDP-alpha-D-glucose: step 1/1. With respect to regulation, competitively inhibited by UDP-glucose. Activated by phosphorylation, which may increase affinity for NAD(+); inhibited by dephosphorylation. Its function is as follows. Catalyzes the conversion of UDP-glucose into UDP-glucuronate, one of the precursors of teichuronic acid. The sequence is that of UDP-glucose 6-dehydrogenase YwqF (ywqF) from Bacillus subtilis (strain 168).